Here is a 588-residue protein sequence, read N- to C-terminus: Cryptochrome-1 (588 aa).

The 130-residue stretch at 3–132 (VNAVHWFRKG…EVIVRISHTL (130 aa)) folds into the Photolyase/cryptochrome alpha/beta domain. Residue lysine 11 forms a Glycyl lysine isopeptide (Lys-Gly) (interchain with G-Cter in ubiquitin) linkage. An LIR 1 motif is present at residues 50–54 (NRWRF). Serine 71 carries the phosphoserine; by AMPK modification. The LIR 2 signature appears at 82-87 (DVFPRL). Lysine 107 participates in a covalent cross-link: Glycyl lysine isopeptide (Lys-Gly) (interchain with G-Cter in ubiquitin). Residues 151 to 156 (KRFQTL) carry the LIR 3 motif. Lysine 159 is covalently cross-linked (Glycyl lysine isopeptide (Lys-Gly) (interchain with G-Cter in ubiquitin)). The residue at position 247 (serine 247) is a Phosphoserine; by MAPK. Serine 252 contacts FAD. 2 short sequence motifs (LIR) span residues 255-260 (LRFGCL) and 271-276 (DLYKKV). At serine 280 the chain carries Phosphoserine; by AMPK. An LIR 6 motif is present at residues 285–290 (SLYGQL). FAD is bound at residue glutamine 289. Lysine 329 participates in a covalent cross-link: Glycyl lysine isopeptide (Lys-Gly) (interchain with G-Cter in ubiquitin). Residues 335–339 (TGFPW) carry the LIR 7 motif. Histidine 355 is an FAD binding site. The tract at residues 371–470 (WISWEEGMKV…LIGVNYPKPM (100 aa)) is required for inhibition of CLOCK-BMAL1-mediated transcription. The LIR 8 motif lies at 379 to 384 (KVFEEL). FAD is bound at residue 387–389 (DAD). Short sequence motifs (LIR) lie at residues 395–400 (GSWMWL), 411–416 (HCYCPV), and 430–435 (RRYLPV). The segment at 471–493 (VNHAEASRLNIERMKQIYQQLSR) is interaction with TIMELESS. Residue lysine 485 forms a Glycyl lysine isopeptide (Lys-Gly) (interchain with G-Cter in ubiquitin) linkage. 2 short sequence motifs (LIR) span residues 486 to 491 (QIYQQL) and 492 to 497 (SRYRGL). The tract at residues 511-588 (GGLMGYAPGE…GPKVQRQSSN (78 aa)) is disordered. A compositionally biased stretch (polar residues) spans 545–568 (DSQQTNPLKQGRSSMGTGLSSGKR). Lysine 567 participates in a covalent cross-link: Glycyl lysine isopeptide (Lys-Gly) (interchain with G-Cter in ubiquitin). Serine 570 carries the post-translational modification Phosphoserine.

Belongs to the DNA photolyase class-1 family. Component of the circadian core oscillator, which includes the CRY proteins, CLOCK or NPAS2, BMAL1 or BMAL2, CSNK1D and/or CSNK1E, TIMELESS, and the PER proteins. Interacts directly with TIMELESS. Interacts directly with PER1, PER2 and PER3; interaction with PER2 inhibits its ubiquitination and vice versa. Interacts with FBXL21. Interacts with FBXL3. Interacts with CLOCK-BMAL1 independently of PER2 and DNA. Interacts with HDAC1, HDAC2 and SIN3B. Interacts with nuclear receptors AR, NR1D1, NR3C1/GR, RORA and RORC; the interaction with at least NR3C1/GR is ligand dependent. Interacts with PRKDC. Interacts with the G protein subunit alpha GNAS; the interaction may block GPCR-mediated regulation of cAMP concentrations. Interacts with PRMT5. Interacts with EZH2. Interacts with MYBBP1A, DOCK7, HNRNPU, RPL7A, RPL8 and RPS3. Interacts with PPP5C (via TPR repeats). Interacts with MAP1LC3B. Interacts with CLOCK. Interacts with BMAL1. Interacts weakly with HDAC3; this interaction is enhanced in the presence of FBXL3. Interacts with TRIM28, KCTD5 and DDB1. Interacts with FOXO1. Interacts with DTL and DDB1-CUL4A complex. Interacts with HNF4A. Interacts with PSMD2 in a KDM8-dependent manner. Interacts with KDM8 in a FBXL3-dependent manner. Interacts with PPARG in a ligand-dependent manner. Interacts with PPARD (via domain NR LBD) and NR1I2 (via domain NR LBD) in a ligand-dependent manner. Interacts with PPARA, NR1I3 and VDR. FAD is required as a cofactor. It depends on (6R)-5,10-methylene-5,6,7,8-tetrahydrofolate as a cofactor. Post-translationally, phosphorylation on Ser-247 by MAPK is important for the inhibition of CLOCK-BMAL1-mediated transcriptional activity. Phosphorylation by CSNK1E requires interaction with PER1 or PER2. Phosphorylation at Ser-71 and Ser-280 by AMPK decreases protein stability. Phosphorylation at Ser-570 exhibits a robust circadian rhythm with a peak at CT8, increases protein stability, prevents SCF(FBXL3)-mediated degradation and is antagonized by interaction with PRKDC. In terms of processing, ubiquitinated by the SCF(FBXL3) and SCF(FBXL21) complexes, regulating the balance between degradation and stabilization. The SCF(FBXL3) complex is mainly nuclear and mediates ubiquitination and subsequent degradation of CRY1. In contrast, cytoplasmic SCF(FBXL21) complex-mediated ubiquitination leads to stabilize CRY1 and counteract the activity of the SCF(FBXL3) complex. The SCF(FBXL3) and SCF(FBXL21) complexes probably mediate ubiquitination at different Lys residues. Ubiquitination at Lys-11 and Lys-107 are specifically ubiquitinated by the SCF(FBXL21) complex but not by the SCF(FBXL3) complex. Ubiquitination may be inhibited by PER2. Deubiquitinated by USP7. Undergoes autophagy-mediated degradation in the liver in a time-dependent manner. Autophagic degradation of CRY1 (an inhibitor of gluconeogenesis) occurs during periods of reduced feeding allowing induction of gluconeogenesis and maintenance of blood glucose levels.

Its subcellular location is the cytoplasm. It localises to the nucleus. In terms of biological role, transcriptional repressor which forms a core component of the circadian clock. The circadian clock, an internal time-keeping system, regulates various physiological processes through the generation of approximately 24 hour circadian rhythms in gene expression, which are translated into rhythms in metabolism and behavior. It is derived from the Latin roots 'circa' (about) and 'diem' (day) and acts as an important regulator of a wide array of physiological functions including metabolism, sleep, body temperature, blood pressure, endocrine, immune, cardiovascular, and renal function. Consists of two major components: the central clock, residing in the suprachiasmatic nucleus (SCN) of the brain, and the peripheral clocks that are present in nearly every tissue and organ system. Both the central and peripheral clocks can be reset by environmental cues, also known as Zeitgebers (German for 'timegivers'). The predominant Zeitgeber for the central clock is light, which is sensed by retina and signals directly to the SCN. The central clock entrains the peripheral clocks through neuronal and hormonal signals, body temperature and feeding-related cues, aligning all clocks with the external light/dark cycle. Circadian rhythms allow an organism to achieve temporal homeostasis with its environment at the molecular level by regulating gene expression to create a peak of protein expression once every 24 hours to control when a particular physiological process is most active with respect to the solar day. Transcription and translation of core clock components (CLOCK, NPAS2, BMAL1, BMAL2, PER1, PER2, PER3, CRY1 and CRY2) plays a critical role in rhythm generation, whereas delays imposed by post-translational modifications (PTMs) are important for determining the period (tau) of the rhythms (tau refers to the period of a rhythm and is the length, in time, of one complete cycle). A diurnal rhythm is synchronized with the day/night cycle, while the ultradian and infradian rhythms have a period shorter and longer than 24 hours, respectively. Disruptions in the circadian rhythms contribute to the pathology of cardiovascular diseases, cancer, metabolic syndromes and aging. A transcription/translation feedback loop (TTFL) forms the core of the molecular circadian clock mechanism. Transcription factors, CLOCK or NPAS2 and BMAL1 or BMAL2, form the positive limb of the feedback loop, act in the form of a heterodimer and activate the transcription of core clock genes and clock-controlled genes (involved in key metabolic processes), harboring E-box elements (5'-CACGTG-3') within their promoters. The core clock genes: PER1/2/3 and CRY1/2 which are transcriptional repressors form the negative limb of the feedback loop and interact with the CLOCK|NPAS2-BMAL1|BMAL2 heterodimer inhibiting its activity and thereby negatively regulating their own expression. This heterodimer also activates nuclear receptors NR1D1/2 and RORA/B/G, which form a second feedback loop and which activate and repress BMAL1 transcription, respectively. CRY1 and CRY2 have redundant functions but also differential and selective contributions at least in defining the pace of the SCN circadian clock and its circadian transcriptional outputs. More potent transcriptional repressor in cerebellum and liver than CRY2, though more effective in lengthening the period of the SCN oscillator. On its side, CRY2 seems to play a critical role in tuning SCN circadian period by opposing the action of CRY1. With CRY2, is dispensable for circadian rhythm generation but necessary for the development of intercellular networks for rhythm synchrony. Capable of translocating circadian clock core proteins such as PER proteins to the nucleus. Interacts with CLOCK-BMAL1 independently of PER proteins and is found at CLOCK-BMAL1-bound sites, suggesting that CRY may act as a molecular gatekeeper to maintain CLOCK-BMAL1 in a poised and repressed state until the proper time for transcriptional activation. Represses the CLOCK-BMAL1 induced transcription of BHLHE40/DEC1, ATF4, MTA1, KLF10 and NAMPT. May repress circadian target genes expression in collaboration with HDAC1 and HDAC2 through histone deacetylation. Mediates the clock-control activation of ATR and modulates ATR-mediated DNA damage checkpoint. In liver, mediates circadian regulation of cAMP signaling and gluconeogenesis by binding to membrane-coupled G proteins and blocking glucagon-mediated increases in intracellular cAMP concentrations and CREB1 phosphorylation. Inhibits hepatic gluconeogenesis by decreasing nuclear FOXO1 levels that down-regulates gluconeogenic gene expression. Besides its role in the maintenance of the circadian clock, is also involved in the regulation of other processes. Represses glucocorticoid receptor NR3C1/GR-induced transcriptional activity by binding to glucocorticoid response elements (GREs). Plays a key role in glucose and lipid metabolism modulation, in part, through the transcriptional regulation of genes involved in these pathways, such as LEP or ACSL4. Represses PPARD and its target genes in the skeletal muscle and limits exercise capacity. Plays an essential role in the generation of circadian rhythms in the retina. Represses the transcriptional activity of NR1I2. The sequence is that of Cryptochrome-1 (Cry1) from Rattus norvegicus (Rat).